The chain runs to 277 residues: Caspase-3 (277 aa).

At M1 the chain carries N-acetylmethionine. 2 consecutive propeptides follow at residues 1–9 (MDNNETSVD) and 10–28 (SKSI…KSMD). K11 carries the post-translational modification N6-acetyllysine. S26 carries the phosphoserine modification. Active-site residues include H121 and C163. C163 carries the post-translational modification S-nitrosocysteine; in inhibited form.

Belongs to the peptidase C14A family. As to quaternary structure, heterotetramer that consists of two anti-parallel arranged heterodimers, each one formed by a 17 kDa (p17) and a 12 kDa (p12) subunit. Interacts with BIRC6/bruce. Post-translationally, cleavage by granzyme B, caspase-6, caspase-8 and caspase-10 generates the two active subunits. Additional processing of the propeptides is likely due to the autocatalytic activity of the activated protease. Active heterodimers between the small subunit of caspase-7 protease and the large subunit of caspase-3 also occur and vice versa. In terms of processing, S-nitrosylated on its catalytic site cysteine in unstimulated cell lines and denitrosylated upon activation of the Fas apoptotic pathway, associated with an increase in intracellular caspase activity. Fas therefore activates caspase-3 not only by inducing the cleavage of the caspase zymogen to its active subunits, but also by stimulating the denitrosylation of its active site thiol. Ubiquitinated by BIRC6; this activity is inhibited by DIABLO/SMAC. In terms of tissue distribution, expressed in heart, brain, liver, and muscle but not in kidney or testis.

The protein resides in the cytoplasm. It carries out the reaction Strict requirement for an Asp residue at positions P1 and P4. It has a preferred cleavage sequence of Asp-Xaa-Xaa-Asp-|- with a hydrophobic amino-acid residue at P2 and a hydrophilic amino-acid residue at P3, although Val or Ala are also accepted at this position.. With respect to regulation, inhibited by BIRC6; following inhibition of BIRC6-caspase binding by DIABLO/SMAC, BIRC6 is subjected to caspase cleavage, leading to an increase in active caspases. In terms of biological role, involved in the activation cascade of caspases responsible for apoptosis execution. At the onset of apoptosis, it proteolytically cleaves poly(ADP-ribose) polymerase PARP1 at a '216-Asp-|-Gly-217' bond. Cleaves and activates sterol regulatory element binding proteins (SREBPs) between the basic helix-loop-helix leucine zipper domain and the membrane attachment domain. Cleaves and activates caspase-6, -7 and -9 (CASP6, CASP7 and CASP9, respectively). Cleaves and inactivates interleukin-18 (IL18). Triggers cell adhesion in sympathetic neurons through RET cleavage. Cleaves IL-1 beta between an Asp and an Ala, releasing the mature cytokine which is involved in a variety of inflammatory processes. Cleaves and inhibits serine/threonine-protein kinase AKT1 in response to oxidative stress. Acts as an inhibitor of type I interferon production during virus-induced apoptosis by mediating cleavage of antiviral proteins CGAS, IRF3 and MAVS, thereby preventing cytokine overproduction. Also involved in pyroptosis by mediating cleavage and activation of gasdermin-E (GSDME). Cleaves XRCC4 and phospholipid scramblase proteins XKR4, XKR8 and XKR9, leading to promote phosphatidylserine exposure on apoptotic cell surface. Cleaves BIRC6 following inhibition of BIRC6-caspase binding by DIABLO/SMAC. This Rattus norvegicus (Rat) protein is Caspase-3 (Casp3).